The primary structure comprises 711 residues: 1,4-alpha-glucan branching enzyme GlgB (711 aa).

Catalysis depends on Asp392, which acts as the Nucleophile. Glu443 (proton donor) is an active-site residue.

This sequence belongs to the glycosyl hydrolase 13 family. GlgB subfamily. In terms of assembly, monomer.

It catalyses the reaction Transfers a segment of a (1-&gt;4)-alpha-D-glucan chain to a primary hydroxy group in a similar glucan chain.. It participates in glycan biosynthesis; glycogen biosynthesis. In terms of biological role, catalyzes the formation of the alpha-1,6-glucosidic linkages in glycogen by scission of a 1,4-alpha-linked oligosaccharide from growing alpha-1,4-glucan chains and the subsequent attachment of the oligosaccharide to the alpha-1,6 position. The polypeptide is 1,4-alpha-glucan branching enzyme GlgB (Corynebacterium jeikeium (strain K411)).